The chain runs to 353 residues: L-tryptophan dehydrogenase (353 aa).

Arginine 44 contacts NAD(+). Lysine 80 serves as the catalytic Proton donor/acceptor. Residues aspartate 114, threonine 146, 176–181, lysine 204, and 255–257 each bind NAD(+); these read GLGNVG and AAN.

It belongs to the Glu/Leu/Phe/Val dehydrogenases family. In terms of assembly, homodimer.

The catalysed reaction is L-tryptophan + NAD(+) + H2O = indole-3-pyruvate + NH4(+) + NADH + H(+). In terms of biological role, catalyzes the reversible oxidative deamination of L-tryptophan to indole-3-pyruvate in the presence of NAD(+). Cannot use other L-amino acids and D-Trp. Involved in the biosynthesis of scytonemin, a cyanobacterial radiation-absorbing pigment. The sequence is that of L-tryptophan dehydrogenase from Nostoc punctiforme (strain ATCC 29133 / PCC 73102).